We begin with the raw amino-acid sequence, 198 residues long: Prolactin (198 aa).

3 disulfides stabilise this stretch: Cys4-Cys11, Cys58-Cys173, and Cys190-Cys198.

This sequence belongs to the somatotropin/prolactin family. In terms of tissue distribution, pituitary gland.

The protein localises to the secreted. The chain is Prolactin from Chelonia mydas (Green sea-turtle).